The following is a 506-amino-acid chain: Galactose/methyl galactoside import ATP-binding protein MglA (506 aa).

ABC transporter domains follow at residues 14–249 (LEMS…VGRS) and 264–506 (VILE…SLHL). An ATP-binding site is contributed by 46–53 (GENGAGKS).

It belongs to the ABC transporter superfamily. Galactose/methyl galactoside importer (TC 3.A.1.2.3) family. The complex is composed of one ATP-binding protein (MglA), two transmembrane proteins (MglC) and a solute-binding protein (MglB).

The protein resides in the cell inner membrane. It carries out the reaction D-galactose(out) + ATP + H2O = D-galactose(in) + ADP + phosphate + H(+). The catalysed reaction is methyl beta-D-galactoside(out) + ATP + H2O = methyl beta-D-galactoside(in) + ADP + phosphate + H(+). Functionally, part of the ABC transporter complex MglABC involved in galactose/methyl galactoside import. Responsible for energy coupling to the transport system. The sequence is that of Galactose/methyl galactoside import ATP-binding protein MglA from Shigella boydii serotype 4 (strain Sb227).